The primary structure comprises 65 residues: Translational regulator CsrA (65 aa).

This sequence belongs to the CsrA/RsmA family. Homodimer; the beta-strands of each monomer intercalate to form a hydrophobic core, while the alpha-helices form wings that extend away from the core.

Its subcellular location is the cytoplasm. Its function is as follows. A translational regulator that binds mRNA to regulate translation initiation and/or mRNA stability. Usually binds in the 5'-UTR at or near the Shine-Dalgarno sequence preventing ribosome-binding, thus repressing translation. Its main target seems to be the major flagellin gene, while its function is anatagonized by FliW. The polypeptide is Translational regulator CsrA (Bordetella petrii (strain ATCC BAA-461 / DSM 12804 / CCUG 43448)).